A 257-amino-acid chain; its full sequence is Tryptophan synthase alpha chain (257 aa).

Catalysis depends on proton acceptor residues Glu51 and Asp62.

This sequence belongs to the TrpA family. As to quaternary structure, tetramer of two alpha and two beta chains.

The catalysed reaction is (1S,2R)-1-C-(indol-3-yl)glycerol 3-phosphate + L-serine = D-glyceraldehyde 3-phosphate + L-tryptophan + H2O. Its pathway is amino-acid biosynthesis; L-tryptophan biosynthesis; L-tryptophan from chorismate: step 5/5. Its function is as follows. The alpha subunit is responsible for the aldol cleavage of indoleglycerol phosphate to indole and glyceraldehyde 3-phosphate. This is Tryptophan synthase alpha chain from Nitratidesulfovibrio vulgaris (strain ATCC 29579 / DSM 644 / CCUG 34227 / NCIMB 8303 / VKM B-1760 / Hildenborough) (Desulfovibrio vulgaris).